Consider the following 376-residue polypeptide: Lipoyl synthase 2, mitochondrial (376 aa).

Residues C109, C114, C120, C140, C144, C147, and S356 each coordinate [4Fe-4S] cluster. The Radical SAM core domain maps to 125–345 (ETGTATATIM…QTLGMEMGFR (221 aa)).

It belongs to the radical SAM superfamily. Lipoyl synthase family. It depends on [4Fe-4S] cluster as a cofactor.

The protein resides in the mitochondrion. It catalyses the reaction [[Fe-S] cluster scaffold protein carrying a second [4Fe-4S](2+) cluster] + N(6)-octanoyl-L-lysyl-[protein] + 2 oxidized [2Fe-2S]-[ferredoxin] + 2 S-adenosyl-L-methionine + 4 H(+) = [[Fe-S] cluster scaffold protein] + N(6)-[(R)-dihydrolipoyl]-L-lysyl-[protein] + 4 Fe(3+) + 2 hydrogen sulfide + 2 5'-deoxyadenosine + 2 L-methionine + 2 reduced [2Fe-2S]-[ferredoxin]. Its pathway is protein modification; protein lipoylation via endogenous pathway; protein N(6)-(lipoyl)lysine from octanoyl-[acyl-carrier-protein]: step 2/2. Catalyzes the radical-mediated insertion of two sulfur atoms into the C-6 and C-8 positions of the octanoyl moiety bound to the lipoyl domains of lipoate-dependent enzymes, thereby converting the octanoylated domains into lipoylated derivatives. The chain is Lipoyl synthase 2, mitochondrial from Pisum sativum (Garden pea).